Reading from the N-terminus, the 810-residue chain is Transducer protein CosT (810 aa).

Over 1–38 (MSEPTADAGDNSPSSTDTAPLDRVKAIALLPLRSYLVK) the chain is Cytoplasmic. A helical membrane pass occupies residues 39-59 (FAVALLVILVIIAAGGFWVQA). The Extracellular portion of the chain corresponds to 60–323 (DATATLEANT…AFALSNQIRT (264 aa)). The chain crosses the membrane as a helical span at residues 324–344 (GILGFILVALVGVVLVGGTIG). The HAMP 1 domain occupies 345–397 (RNTAAAVQSLSAAAAEIEAGNYDVDVASSRRDEIGQLFASIGSMRDALVTQID). The Cytoplasmic segment spans residues 345-810 (RNTAAAVQSL…DRDVTPTQTD (466 aa)). Residues 403-427 (REQATEAQQDAEAERERAEDARERA) are disordered. Residues 414–427 (EAERERAEDARERA) are compositionally biased toward basic and acidic residues. The region spanning 439–493 (AELEAQAERYSDVMAACADGDLTRRMPADDTDNEAMAAIAASFNEMLAQWEHTII) is the HAMP 2 domain. The Methyl-accepting transducer domain occupies 512 to 748 (GAADAERASG…EAVSMTEEVA (237 aa)). Glutamate methyl ester (Glu) is present on residues E556 and E739. A disordered region spans residues 751 to 784 (SDSTAGEAQSVSAAAEEQAASMSEISDSVESLSG). Over residues 755-774 (AGEAQSVSAAAEEQAASMSE) the composition is skewed to low complexity. A compositionally biased stretch (polar residues) spans 775–784 (ISDSVESLSG).

The protein belongs to the methyl-accepting chemotaxis (MCP) protein family. Methylated by CheR.

The protein resides in the cell membrane. Mediates chemotaxis towards compatible osmolytes. Probably transduces the signal from the substrate-binding protein CosB to the histidine kinase CheA. The polypeptide is Transducer protein CosT (cosT) (Halobacterium salinarum (strain ATCC 700922 / JCM 11081 / NRC-1) (Halobacterium halobium)).